Consider the following 757-residue polypeptide: Protein aardvark (757 aa).

3 disordered regions span residues 39-63 (SSIN…DSNN), 122-166 (LEEN…SSIL), and 256-285 (SSNG…IESS). A coiled-coil region spans residues 121 to 205 (ILEENNNNNN…FNQFNFLEGI (85 aa)). Low complexity-rich tracts occupy residues 125–164 (NNNN…SSSS) and 256–270 (SSNG…NNNN). Residues 310-356 (QFDIFLIPTEMLVHLLSFLSANDLWRISLTCKRIWYIVDVFKFWELL) form the F-box domain. ARM repeat units follow at residues 454-498 (GGIS…SNDN), 506-548 (GGIQ…VAIE), 549-591 (GGIQ…SAKE), 592-634 (GGIG…ISRQ), 635-678 (NGIQ…IARE), and 679-723 (GGIN…RSGG).

Belongs to the beta-catenin family.

It is found in the cytoplasm. It localises to the cell junction. Functionally, required to regulate pattern formation during multi-cellular stages of development and for the formation of adherens junctions. Plays a structural role during the regulation of stalk formation. Involved in cell signaling. Required for spore-cell differentiation. Overexpression increases number and size of cell junctions and reduces spore-cell formation. The sequence is that of Protein aardvark (aarA) from Dictyostelium discoideum (Social amoeba).